The following is a 241-amino-acid chain: CD99 antigen-like protein 2 (241 aa).

Residues 1–23 (MAKWGSPFVFALACLALSWRVYG) form the signal peptide. Over 24-173 (DDFDLYDALG…TGFGSQAETG (150 aa)) the chain is Extracellular. A disordered region spans residues 30–168 (DALGDPTEKP…NDGSDTGFGS (139 aa)). A compositionally biased stretch (gly residues) spans 143–154 (GGGGGGGGGRAT). A helical membrane pass occupies residues 174–196 (TIAGIASALAMALIGAVSSYISY). At 197-241 (QQKKFCFSIQEGLNAEYVKGEHMEAVVSEEPQVKYSVVESQSAIP) the chain is on the cytoplasmic side.

The protein belongs to the CD99 family.

The protein resides in the cell membrane. It localises to the cell junction. May function as a homophilic adhesion molecule. In Xenopus tropicalis (Western clawed frog), this protein is CD99 antigen-like protein 2 (cd99l2).